A 266-amino-acid chain; its full sequence is Small ribosomal subunit protein uS3 (266 aa).

Residues 39–107 (VREYLKKKLK…PVHVNIEEIR (69 aa)) enclose the KH type-2 domain. Residues 214-266 (PVVEEVTEDKRPRRNARPGDRRPRRDGEGGAPGARRGGPRRGAGKPEDGKTGE) form a disordered region. 2 stretches are compositionally biased toward basic and acidic residues: residues 230-241 (RPGDRRPRRDGE) and 257-266 (GKPEDGKTGE).

This sequence belongs to the universal ribosomal protein uS3 family. As to quaternary structure, part of the 30S ribosomal subunit. Forms a tight complex with proteins S10 and S14.

In terms of biological role, binds the lower part of the 30S subunit head. Binds mRNA in the 70S ribosome, positioning it for translation. In Burkholderia thailandensis (strain ATCC 700388 / DSM 13276 / CCUG 48851 / CIP 106301 / E264), this protein is Small ribosomal subunit protein uS3.